Reading from the N-terminus, the 395-residue chain is S-adenosylmethionine synthase (395 aa).

His-14 is a binding site for ATP. Asp-16 is a Mg(2+) binding site. Glu-42 provides a ligand contact to K(+). Glu-55 and Gln-98 together coordinate L-methionine. The segment at 98-108 (QSPDIAMGVNK) is flexible loop. ATP contacts are provided by residues 174–176 (DGK), 240–241 (RF), Asp-249, 255–256 (RK), Ala-272, and Lys-276. Asp-249 contributes to the L-methionine binding site. Residue Lys-280 coordinates L-methionine.

Belongs to the AdoMet synthase family. As to quaternary structure, homotetramer; dimer of dimers. It depends on Mg(2+) as a cofactor. Requires K(+) as cofactor.

The protein localises to the cytoplasm. The catalysed reaction is L-methionine + ATP + H2O = S-adenosyl-L-methionine + phosphate + diphosphate. The protein operates within amino-acid biosynthesis; S-adenosyl-L-methionine biosynthesis; S-adenosyl-L-methionine from L-methionine: step 1/1. Catalyzes the formation of S-adenosylmethionine (AdoMet) from methionine and ATP. The overall synthetic reaction is composed of two sequential steps, AdoMet formation and the subsequent tripolyphosphate hydrolysis which occurs prior to release of AdoMet from the enzyme. This chain is S-adenosylmethionine synthase, found in Caldanaerobacter subterraneus subsp. tengcongensis (strain DSM 15242 / JCM 11007 / NBRC 100824 / MB4) (Thermoanaerobacter tengcongensis).